We begin with the raw amino-acid sequence, 520 residues long: Ribonuclease Y (520 aa).

The helical transmembrane segment at 3-23 (FILVLCTVSSLFVGGGTGIFL) threads the bilayer. Positions 209–272 (TVTAVTLPSE…QVAKMALERL (64 aa)) constitute a KH domain. An HD domain is found at 335 to 429 (VLRHSIEVAS…VQASDCLSGA (95 aa)).

The protein belongs to the RNase Y family.

It localises to the cell membrane. In terms of biological role, endoribonuclease that initiates mRNA decay. This chain is Ribonuclease Y, found in Lawsonia intracellularis (strain PHE/MN1-00).